The following is a 178-amino-acid chain: Large ribosomal subunit protein uL13m (178 aa).

This sequence belongs to the universal ribosomal protein uL13 family. As to quaternary structure, component of the mitochondrial ribosome large subunit (39S) which comprises a 16S rRNA and about 50 distinct proteins.

The protein localises to the mitochondrion. The chain is Large ribosomal subunit protein uL13m (mRpL13) from Drosophila melanogaster (Fruit fly).